A 405-amino-acid polypeptide reads, in one-letter code: Tyrosine--tRNA ligase (405 aa).

Position 35 (tyrosine 35) interacts with L-tyrosine. The 'HIGH' region motif lies at 40-49 (ATSSSLHIGH). Residues tyrosine 166 and glutamine 170 each coordinate L-tyrosine. The 'KMSKS' region motif lies at 226–230 (KMGKS). Lysine 229 provides a ligand contact to ATP. Residues 340–404 (VLLINLMLDS…VGKKKFLRIV (65 aa)) form the S4 RNA-binding domain.

Belongs to the class-I aminoacyl-tRNA synthetase family. TyrS type 1 subfamily. Homodimer.

It localises to the cytoplasm. The enzyme catalyses tRNA(Tyr) + L-tyrosine + ATP = L-tyrosyl-tRNA(Tyr) + AMP + diphosphate + H(+). In terms of biological role, catalyzes the attachment of tyrosine to tRNA(Tyr) in a two-step reaction: tyrosine is first activated by ATP to form Tyr-AMP and then transferred to the acceptor end of tRNA(Tyr). In Borreliella afzelii (strain PKo) (Borrelia afzelii), this protein is Tyrosine--tRNA ligase.